The primary structure comprises 563 residues: Mitochondrial distribution and morphology protein 34 (563 aa).

One can recognise an SMP-LTD domain in the interval 1–195 (MAFNFNWSPL…LPAIIHRLSL (195 aa)). 2 disordered regions span residues 298–499 (ERGD…PHTP) and 531–563 (ARRQ…PKAL). 2 stretches are compositionally biased toward polar residues: residues 303 to 332 (AGTT…FSNR) and 346 to 357 (SLVNMNSATTGL). A compositionally biased stretch (basic residues) spans 365 to 383 (SRSHPTRKKKNRVVNLRKP). Over residues 386–407 (TESSESGESETASTTAVSEPTV) the composition is skewed to low complexity. Composition is skewed to polar residues over residues 458–471 (PSLT…INTQ) and 478–488 (YNQSASTSYTP). Over residues 531–540 (ARRQHDDKTA) the composition is skewed to basic and acidic residues.

This sequence belongs to the MDM34 family. In terms of assembly, component of the ER-mitochondria encounter structure (ERMES) or MDM complex, composed of MMM1, MDM10, MDM12 and MDM34.

It localises to the mitochondrion outer membrane. Component of the ERMES/MDM complex, which serves as a molecular tether to connect the endoplasmic reticulum (ER) and mitochondria. Components of this complex are involved in the control of mitochondrial shape and protein biogenesis, and function in nonvesicular lipid trafficking between the ER and mitochondria. MDM34 is required for the interaction of the ER-resident membrane protein MMM1 and the outer mitochondrial membrane-resident beta-barrel protein MDM10. The polypeptide is Mitochondrial distribution and morphology protein 34 (Botryotinia fuckeliana (strain B05.10) (Noble rot fungus)).